A 172-amino-acid chain; its full sequence is Bifunctional protein PyrR (172 aa).

The PRPP-binding motif lies at 90–102; it reads LVLIDDVLMSGRT.

The protein belongs to the purine/pyrimidine phosphoribosyltransferase family. PyrR subfamily.

It catalyses the reaction UMP + diphosphate = 5-phospho-alpha-D-ribose 1-diphosphate + uracil. Functionally, regulates the transcription of the pyrimidine nucleotide (pyr) operon in response to exogenous pyrimidines. Also displays a weak uracil phosphoribosyltransferase activity which is not physiologically significant. The protein is Bifunctional protein PyrR of Pseudomonas putida (strain W619).